The chain runs to 155 residues: SsrA-binding protein (155 aa).

The protein belongs to the SmpB family.

The protein localises to the cytoplasm. Its function is as follows. Required for rescue of stalled ribosomes mediated by trans-translation. Binds to transfer-messenger RNA (tmRNA), required for stable association of tmRNA with ribosomes. tmRNA and SmpB together mimic tRNA shape, replacing the anticodon stem-loop with SmpB. tmRNA is encoded by the ssrA gene; the 2 termini fold to resemble tRNA(Ala) and it encodes a 'tag peptide', a short internal open reading frame. During trans-translation Ala-aminoacylated tmRNA acts like a tRNA, entering the A-site of stalled ribosomes, displacing the stalled mRNA. The ribosome then switches to translate the ORF on the tmRNA; the nascent peptide is terminated with the 'tag peptide' encoded by the tmRNA and targeted for degradation. The ribosome is freed to recommence translation, which seems to be the essential function of trans-translation. The polypeptide is SsrA-binding protein (Ligilactobacillus salivarius (strain UCC118) (Lactobacillus salivarius)).